Reading from the N-terminus, the 515-residue chain is Bifunctional purine biosynthesis protein PurH (515 aa).

The 145-residue stretch at 1 to 145 folds into the MGS-like domain; that stretch reads MTKRALISVS…KNHASVTVVV (145 aa).

This sequence belongs to the PurH family.

It carries out the reaction (6R)-10-formyltetrahydrofolate + 5-amino-1-(5-phospho-beta-D-ribosyl)imidazole-4-carboxamide = 5-formamido-1-(5-phospho-D-ribosyl)imidazole-4-carboxamide + (6S)-5,6,7,8-tetrahydrofolate. The catalysed reaction is IMP + H2O = 5-formamido-1-(5-phospho-D-ribosyl)imidazole-4-carboxamide. It participates in purine metabolism; IMP biosynthesis via de novo pathway; 5-formamido-1-(5-phospho-D-ribosyl)imidazole-4-carboxamide from 5-amino-1-(5-phospho-D-ribosyl)imidazole-4-carboxamide (10-formyl THF route): step 1/1. Its pathway is purine metabolism; IMP biosynthesis via de novo pathway; IMP from 5-formamido-1-(5-phospho-D-ribosyl)imidazole-4-carboxamide: step 1/1. This Streptococcus pyogenes serotype M2 (strain MGAS10270) protein is Bifunctional purine biosynthesis protein PurH.